Here is a 344-residue protein sequence, read N- to C-terminus: Ribosomal RNA large subunit methyltransferase Cfr (344 aa).

The active-site Proton acceptor is the glutamate 90. The region spanning 97 to 330 (KQGWESFCIS…ATVRTQFGSE (234 aa)) is the Radical SAM core domain. Cysteine 104 and cysteine 335 form a disulfide bridge. [4Fe-4S] cluster-binding residues include cysteine 111, cysteine 115, and cysteine 118. S-adenosyl-L-methionine is bound by residues 157-158 (GE), serine 188, 211-213 (SLH), and asparagine 292. Cysteine 335 serves as the catalytic S-methylcysteine intermediate.

It belongs to the radical SAM superfamily. RlmN family. Cfr subfamily. [4Fe-4S] cluster serves as cofactor.

It localises to the cytoplasm. The catalysed reaction is adenosine(2503) in 23S rRNA + 2 reduced [2Fe-2S]-[ferredoxin] + 2 S-adenosyl-L-methionine = 8-methyladenosine(2503) in 23S rRNA + 5'-deoxyadenosine + L-methionine + 2 oxidized [2Fe-2S]-[ferredoxin] + S-adenosyl-L-homocysteine. Functionally, specifically methylates position 8 of adenine 2503 in 23S rRNA. Confers resistance to some classes of antibiotics. This Clostridium botulinum (strain Hall / ATCC 3502 / NCTC 13319 / Type A) protein is Ribosomal RNA large subunit methyltransferase Cfr.